Here is a 423-residue protein sequence, read N- to C-terminus: Acetylornithine aminotransferase, mitochondrial (423 aa).

Lysine 276 carries the post-translational modification N6-(pyridoxal phosphate)lysine.

This sequence belongs to the class-III pyridoxal-phosphate-dependent aminotransferase family. Pyridoxal 5'-phosphate serves as cofactor.

It localises to the mitochondrion matrix. The catalysed reaction is N(2)-acetyl-L-ornithine + 2-oxoglutarate = N-acetyl-L-glutamate 5-semialdehyde + L-glutamate. Its pathway is amino-acid biosynthesis; L-arginine biosynthesis; N(2)-acetyl-L-ornithine from L-glutamate: step 4/4. In Eremothecium gossypii (strain ATCC 10895 / CBS 109.51 / FGSC 9923 / NRRL Y-1056) (Yeast), this protein is Acetylornithine aminotransferase, mitochondrial (ARG8).